We begin with the raw amino-acid sequence, 4083 residues long: Dynein axonemal heavy chain 3 (4083 aa).

Disordered regions lie at residues 1–37 (MSDT…VSAN) and 111–132 (DKTS…PSKK). Residues 1-1357 (MSDTNCSAQK…HVQMITTEAL (1357 aa)) are stem. Coiled coils occupy residues 1026 to 1052 (IKPI…AWLK) and 1108 to 1133 (RMTE…YLEK). AAA stretches follow at residues 1358–1579 (YGYE…VLTA), 1639–1870 (EALN…LHCK), 2003–2251 (TIPA…VIQG), and 2362–2613 (EFNS…LLRH). ATP-binding positions include 1396–1403 (GPAGTGKT), 1677–1684 (GDPMGGKT), 2041–2048 (GPTGTGKS), and 2401–2408 (GIGGSGRQ). The interval 2628 to 2927 (FKTLLNSKRQ…NSLEKNIEIC (300 aa)) is stalk. The stretch at 2651–2714 (QKLEFASSQV…DEKEANAAAA (64 aa)) forms a coiled coil. AAA stretches follow at residues 3012–3242 (LGDP…EISE) and 3455–3679 (IQNF…QIQM).

This sequence belongs to the dynein heavy chain family. In terms of assembly, consists of at least two heavy chains and a number of intermediate and light chains.

Its subcellular location is the cytoplasm. It is found in the cytoskeleton. The protein localises to the cilium axoneme. Functionally, force generating protein of respiratory cilia. Produces force towards the minus ends of microtubules. Dynein has ATPase activity; the force-producing power stroke is thought to occur on release of ADP. Involved in sperm motility; implicated in sperm flagellar assembly. The polypeptide is Dynein axonemal heavy chain 3 (Dnah3) (Mus musculus (Mouse)).